A 458-amino-acid chain; its full sequence is Paired box protein Pax-8 (458 aa).

The segment at residues 18–144 (GHGGLNQLGG…SSINRIIRTK (127 aa)) is a DNA-binding region (paired). The segment at 21–77 (GLNQLGGAFVNGRPLPEVVRQRIVDLAHQGVRPCDISRQLRVSHGCVSKILGRYYET) is PAI subdomain. An RED subdomain region spans residues 96-144 (KVVEKIGDYKRQNPTMFAWEIRDRLLAEGVCDNDTVPSVSSINRIIRTK). Residues 198–217 (PGADGKRKLDDSDQESCRLS) are disordered.

The protein resides in the nucleus. Functionally, probable transcription factor. Involved in kidney development, acting synergistically with lhx1/lim-1 to establish the pronephric primordium in late gastrulae/early neurulae. This Xenopus tropicalis (Western clawed frog) protein is Paired box protein Pax-8.